We begin with the raw amino-acid sequence, 130 residues long: MFDIGFWELVLIFVVGLVVLGPERLPHAIRSVARFVSAAKSMANSVKDELAHELKVQELQENLRKAEQMGMEELSPDLKASVEQLKQAAQSVNRPYADVSAKNEATSSSSSDATHQTEATKTSAANTKSE.

A helical membrane pass occupies residues 1-21 (MFDIGFWELVLIFVVGLVVLG). The tract at residues 85 to 130 (LKQAAQSVNRPYADVSAKNEATSSSSSDATHQTEATKTSAANTKSE) is disordered. The span at 112-130 (DATHQTEATKTSAANTKSE) shows a compositional bias: polar residues.

This sequence belongs to the TatB family. In terms of assembly, the Tat system comprises two distinct complexes: a TatABC complex, containing multiple copies of TatA, TatB and TatC subunits, and a separate TatA complex, containing only TatA subunits. Substrates initially bind to the TatABC complex, which probably triggers association of the separate TatA complex to form the active translocon.

Its subcellular location is the cell inner membrane. In terms of biological role, part of the twin-arginine translocation (Tat) system that transports large folded proteins containing a characteristic twin-arginine motif in their signal peptide across membranes. Together with TatC, TatB is part of a receptor directly interacting with Tat signal peptides. TatB may form an oligomeric binding site that transiently accommodates folded Tat precursor proteins before their translocation. The sequence is that of Sec-independent protein translocase protein TatB from Vibrio vulnificus (strain CMCP6).